Reading from the N-terminus, the 450-residue chain is MKTWPAPTAPTPVRATVTVPGSKSQTNRALVLAALAAAQGRGASTISGALRSRDTELMLDALQTLGLRVDGVGSELTVSGRIEPGPGARVDCGLAGTVLRFVPPLAALGSVPVTFDGDQQARGRPIAPLLDALRELGVAVDGTGLPFRVHGNGSLAGGTVAIDASASSQFVSGLLLSAASFTDGLTVQHTGSSLPSAPHIAMTAAMLRQAGVDIDDSTPNRWQVRPGPVAARRWDIEPDLTNAVAFLSAAVVSGGTVRITGWPRVSVQPADHILAILRQLNAVVIHADSSLEVRGPTGYDGFDVDLRAVGELTPSVAALAALASPGSVSRLSGIAHLRGHETDRLAALSTEINRLGGTCRETPDGLVITATPLRPGIWRAYADHRMAMAGAIIGLRVAGVEVDDIAATTKTLPEFPRLWAEMVGPGQGWGYPQPRSGQRARRATGQGSGG.

3 residues coordinate 3-phosphoshikimate: Lys23, Ser24, and Arg28. Lys23 provides a ligand contact to phosphoenolpyruvate. The phosphoenolpyruvate site is built by Gly96 and Arg124. 3-phosphoshikimate contacts are provided by Ser167, Ser168, Gln169, Ser196, Glu311, and His340. Phosphoenolpyruvate is bound at residue Gln169. The active-site Proton acceptor is the Glu311. Phosphoenolpyruvate contacts are provided by Arg344, Arg385, and Lys410. Residues 426–450 (GQGWGYPQPRSGQRARRATGQGSGG) are disordered.

It belongs to the EPSP synthase family. Monomer.

The protein localises to the cytoplasm. It catalyses the reaction 3-phosphoshikimate + phosphoenolpyruvate = 5-O-(1-carboxyvinyl)-3-phosphoshikimate + phosphate. Its pathway is metabolic intermediate biosynthesis; chorismate biosynthesis; chorismate from D-erythrose 4-phosphate and phosphoenolpyruvate: step 6/7. Functionally, catalyzes the transfer of the enolpyruvyl moiety of phosphoenolpyruvate (PEP) to the 5-hydroxyl of shikimate-3-phosphate (S3P) to produce enolpyruvyl shikimate-3-phosphate and inorganic phosphate. This chain is 3-phosphoshikimate 1-carboxyvinyltransferase, found in Mycobacterium bovis (strain ATCC BAA-935 / AF2122/97).